Here is a 449-residue protein sequence, read N- to C-terminus: MVSPETSSSHYQSSPMAKYAGTRTRPVVCISDVVLFLGGAFMSLILVWSFFSFSSISPNLTVKNEESSNKCSSGIDMSQDPTDPVYYDDPDLTYTIEKPVKNWDEKRRRWLNLHPSFIPGAENRTVMVTGSQSAPCKNPIGDHLLLRFFKNKVDYCRIHGHDIFYSNALLHPKMNSYWAKLPAVKAAMIAHPEAEWIWWVDSDALFTDMDFTPPWRRYKEHNLVVHGWPGVIYNDRSWTALNAGVFLIRNCQWSMELIDTWTGMGPVSPEYAKWGQIQRSIFKDKLFPESDDQTALLYLLYKHREVYYPKIYLEGDFYFEGYWLEIVPGLSNVTERYLEMEREDATLRRRHAEKVSERYAAFREERFLKGERGGKGSKRRPFVTHFTGCQPCSGDHNKMYDGDTCWNGMIKAINFADNQVMRKYGFVHSDLGKTSPLQPVPFDYPDEPW.

Topologically, residues 1-32 are cytoplasmic; that stretch reads MVSPETSSSHYQSSPMAKYAGTRTRPVVCISD. A helical; Signal-anchor for type II membrane protein membrane pass occupies residues 33–53; the sequence is VVLFLGGAFMSLILVWSFFSF. Topologically, residues 54-449 are lumenal; that stretch reads SSISPNLTVK…VPFDYPDEPW (396 aa). 3 N-linked (GlcNAc...) asparagine glycosylation sites follow: Asn-59, Asn-123, and Asn-332.

It belongs to the glycosyltransferase 34 family.

Its subcellular location is the golgi apparatus membrane. Probable glycosyltransferase that may be involved in the biosynthesis of xyloglucan. The polypeptide is Putative glycosyltransferase 7 (GT7) (Arabidopsis thaliana (Mouse-ear cress)).